The primary structure comprises 386 residues: Phosphoglycerate kinase (386 aa).

Substrate contacts are provided by residues 21-23, R36, 59-62, R112, and R145; these read DLN and HLGR. Residues K196, E313, and 339–342 each bind ATP; that span reads GGDT.

Belongs to the phosphoglycerate kinase family. Monomer.

It is found in the cytoplasm. It catalyses the reaction (2R)-3-phosphoglycerate + ATP = (2R)-3-phospho-glyceroyl phosphate + ADP. Its pathway is carbohydrate degradation; glycolysis; pyruvate from D-glyceraldehyde 3-phosphate: step 2/5. The protein is Phosphoglycerate kinase (pgk) of Haemophilus influenzae (strain ATCC 51907 / DSM 11121 / KW20 / Rd).